Consider the following 421-residue polypeptide: Testin (421 aa).

The region spanning 92–199 (MILTNPVAAK…GDVKLPCEMD (108 aa)) is the PET domain. LIM zinc-binding domains follow at residues 234–297 (YSCY…CDSE), 299–359 (PRCA…NHAV), and 362–421 (QGCH…KRMS).

This sequence belongs to the prickle / espinas / testin family. In terms of assembly, interacts via LIM domain 1 with ZYX. Interacts (via LIM domain 3) with ENAH and VASP. Interacts with ALKBH4, talin, actin, alpha-actinin, GRIP1 and PXN. Interacts (via LIM domain 2) with ACTL7A (via N-terminus). Heterodimer with ACTL7A; the heterodimer interacts with ENAH to form a heterotrimer.

Its subcellular location is the cytoplasm. The protein localises to the cell junction. The protein resides in the focal adhesion. Functionally, scaffold protein that may play a role in cell adhesion, cell spreading and in the reorganization of the actin cytoskeleton. Plays a role in the regulation of cell proliferation. May act as a tumor suppressor. The sequence is that of Testin (TES) from Nomascus leucogenys (Northern white-cheeked gibbon).